The primary structure comprises 447 residues: GTPase Der (447 aa).

EngA-type G domains lie at 2–166 (YRVA…PEYE) and 183–358 (IKVA…NQSW). GTP contacts are provided by residues 8–15 (GRPNVGKS), 55–59 (DTGGY), 118–121 (NKID), 189–196 (GKPNAGKS), 236–240 (DTAGL), and 301–304 (NKID). In terms of domain architecture, KH-like spans 359-443 (KRVGTGQLNR…PIKLLLRGKE (85 aa)).

It belongs to the TRAFAC class TrmE-Era-EngA-EngB-Septin-like GTPase superfamily. EngA (Der) GTPase family. As to quaternary structure, associates with the 50S ribosomal subunit.

Its function is as follows. GTPase that plays an essential role in the late steps of ribosome biogenesis. The sequence is that of GTPase Der from Persephonella marina (strain DSM 14350 / EX-H1).